The sequence spans 370 residues: Aspartate-semialdehyde dehydrogenase 1 (370 aa).

NADP(+) contacts are provided by residues 9–12 (RGMV), 36–37 (TS), and Gln-72. Residue Arg-101 coordinates phosphate. The Acyl-thioester intermediate role is filled by Cys-134. The residue at position 134 (Cys-134) is an S-cysteinyl cysteine; in inhibited form. A substrate-binding site is contributed by Gln-161. Residues 164-165 (SG) and Pro-192 contribute to the NADP(+) site. Position 240 (Glu-240) interacts with substrate. Lys-243 is a binding site for phosphate. Arg-267 is a substrate binding site. The active-site Proton acceptor is His-274. Gln-350 contributes to the NADP(+) binding site.

Belongs to the aspartate-semialdehyde dehydrogenase family. In terms of assembly, homodimer.

It catalyses the reaction L-aspartate 4-semialdehyde + phosphate + NADP(+) = 4-phospho-L-aspartate + NADPH + H(+). The protein operates within amino-acid biosynthesis; L-lysine biosynthesis via DAP pathway; (S)-tetrahydrodipicolinate from L-aspartate: step 2/4. Its pathway is amino-acid biosynthesis; L-methionine biosynthesis via de novo pathway; L-homoserine from L-aspartate: step 2/3. It functions in the pathway amino-acid biosynthesis; L-threonine biosynthesis; L-threonine from L-aspartate: step 2/5. Its activity is regulated as follows. Inhibited by S-methyl-L-cysteine sulfoxide in vitro, via the formation of a covalently bound cysteine at the active site Cys-134. Catalyzes the NADPH-dependent formation of L-aspartate-semialdehyde (L-ASA) by the reductive dephosphorylation of L-aspartyl-4-phosphate. The chain is Aspartate-semialdehyde dehydrogenase 1 (asd1) from Vibrio cholerae serotype O1 (strain ATCC 39315 / El Tor Inaba N16961).